Here is a 517-residue protein sequence, read N- to C-terminus: Gamma-1-syntrophin (517 aa).

Residues 57-140 enclose the PDZ domain; sequence TVTIRRQTVG…EVTLTVSFLK (84 aa). A PH domain is found at 283–390; that stretch reads QIVYMGWCEA…WERAFQTATF (108 aa).

The protein belongs to the syntrophin family. As to quaternary structure, interacts with the dystrophin protein DMD and related proteins DTNA and DTNB. Interacts with DGKZ.

It is found in the cytoplasm. Its subcellular location is the cytoskeleton. The protein localises to the nucleus. In terms of biological role, adapter protein that binds to and probably organizes the subcellular localization of a variety of proteins. May link various receptors to the actin cytoskeleton and the dystrophin glycoprotein complex. May participate in regulating the subcellular location of diacylglycerol kinase-zeta to ensure that diacylglycerol is rapidly inactivated following receptor activation. This is Gamma-1-syntrophin (Sntg1) from Mus musculus (Mouse).